The primary structure comprises 418 residues: CinA-like protein (418 aa).

This sequence belongs to the CinA family.

The chain is CinA-like protein from Flavobacterium psychrophilum (strain ATCC 49511 / DSM 21280 / CIP 103535 / JIP02/86).